The sequence spans 437 residues: Amino-acid acetyltransferase (437 aa).

The region spanning 289–429 (ENIRLATSFD…EHYNYQRMSK (141 aa)) is the N-acetyltransferase domain.

Belongs to the acetyltransferase family. ArgA subfamily.

It is found in the cytoplasm. It catalyses the reaction L-glutamate + acetyl-CoA = N-acetyl-L-glutamate + CoA + H(+). It functions in the pathway amino-acid biosynthesis; L-arginine biosynthesis; N(2)-acetyl-L-ornithine from L-glutamate: step 1/4. This Actinobacillus pleuropneumoniae serotype 3 (strain JL03) protein is Amino-acid acetyltransferase.